We begin with the raw amino-acid sequence, 66 residues long: Large ribosomal subunit protein bL35 (66 aa).

The disordered stretch occupies residues 1-26; that stretch reads MPKQKTHRGAAKRFKKTGSGKLKRSH.

Belongs to the bacterial ribosomal protein bL35 family.

The sequence is that of Large ribosomal subunit protein bL35 from Bacillus anthracis.